A 176-amino-acid polypeptide reads, in one-letter code: Oleosin Ara h 14.0102 (176 aa).

An N-acetylalanine; alternate modification is found at A2. The next 2 helical transmembrane spans lie at 61–81 (GTLLLLSGLSLLGTIIGLAIA) and 87–107 (FFSPVIVPAVVTIGLAVIGIL). The tract at residues 156–176 (KTKDAGQEIQTKAQDVKRSSS) is disordered.

This sequence belongs to the oleosin family. As to quaternary structure, homodimer. Forms oligomers. In terms of tissue distribution, expressed in seeds (at protein level). Not expressed in leaves.

It localises to the lipid droplet. Its subcellular location is the membrane. May have a structural role to stabilize the lipid body during desiccation of the seed by preventing coalescence of the oil. Probably interacts with both lipid and phospholipid moieties of lipid bodies. May also provide recognition signals for specific lipase anchorage in lipolysis during seedling growth. In Arachis hypogaea (Peanut), this protein is Oleosin Ara h 14.0102.